Here is a 309-residue protein sequence, read N- to C-terminus: Ornithine carbamoyltransferase (309 aa).

Residues 56–59, Q83, R107, and 134–137 each bind carbamoyl phosphate; these read STRT and HPCQ. Residues N165, D223, and 227–228 each bind L-ornithine; that span reads SM. Carbamoyl phosphate-binding positions include 263-264 and R291; that span reads CL.

The protein belongs to the aspartate/ornithine carbamoyltransferase superfamily. OTCase family.

It is found in the cytoplasm. It catalyses the reaction carbamoyl phosphate + L-ornithine = L-citrulline + phosphate + H(+). Its pathway is amino-acid biosynthesis; L-arginine biosynthesis; L-arginine from L-ornithine and carbamoyl phosphate: step 1/3. Its function is as follows. Reversibly catalyzes the transfer of the carbamoyl group from carbamoyl phosphate (CP) to the N(epsilon) atom of ornithine (ORN) to produce L-citrulline. In Burkholderia lata (strain ATCC 17760 / DSM 23089 / LMG 22485 / NCIMB 9086 / R18194 / 383), this protein is Ornithine carbamoyltransferase.